We begin with the raw amino-acid sequence, 132 residues long: Large-conductance mechanosensitive channel (132 aa).

Transmembrane regions (helical) follow at residues 11-31 and 75-95; these read FISR…GAFG and GSFL…FLLV.

It belongs to the MscL family. Homopentamer.

Its subcellular location is the cell inner membrane. In terms of biological role, channel that opens in response to stretch forces in the membrane lipid bilayer. May participate in the regulation of osmotic pressure changes within the cell. This chain is Large-conductance mechanosensitive channel, found in Synechococcus sp. (strain JA-2-3B'a(2-13)) (Cyanobacteria bacterium Yellowstone B-Prime).